Consider the following 254-residue polypeptide: rRNA-processing protein UTP23 (254 aa).

The tract at residues 172–254 is disordered; the sequence is NDPNIEKLQE…PVSNGTTAAQ (83 aa). 2 stretches are compositionally biased toward basic and acidic residues: residues 175–192 and 218–228; these read NIEK…ESIT and DEVKDKEDTSK. Residue Ser182 is modified to Phosphoserine. Positions 229 to 240 are enriched in basic residues; sequence EKKKRRRRKHKS. Over residues 241–254 the composition is skewed to polar residues; it reads NTNVPVSNGTTAAQ.

This sequence belongs to the UTP23/FCF1 family. UTP23 subfamily.

Its subcellular location is the mitochondrion. The protein resides in the nucleus. The protein localises to the nucleolus. In terms of biological role, involved in rRNA-processing and ribosome biogenesis. This is rRNA-processing protein UTP23 (UTP23) from Saccharomyces cerevisiae (strain ATCC 204508 / S288c) (Baker's yeast).